A 273-amino-acid polypeptide reads, in one-letter code: uncharacterized protein (273 aa).

2 helical membrane passes run 24–44 (VGVS…VTIL) and 103–123 (IVGP…EAWA). Residues 132 to 194 (SDLPHHGRQS…QPPAQTQPYR (63 aa)) are disordered. Residues 164 to 179 (SSHHIRSPAVARHHKT) are compositionally biased toward basic residues. Residues 183–192 (TTQPPAQTQP) are compositionally biased toward low complexity.

The protein localises to the cell membrane. This is an uncharacterized protein from Sinorhizobium fredii (strain NBRC 101917 / NGR234).